A 575-amino-acid polypeptide reads, in one-letter code: Isocitrate dehydrogenase kinase/phosphatase (575 aa).

ATP-binding positions include 315–321 and K336; that span reads APGIRGM. Residue D371 is part of the active site.

Belongs to the AceK family.

It is found in the cytoplasm. The enzyme catalyses L-seryl-[isocitrate dehydrogenase] + ATP = O-phospho-L-seryl-[isocitrate dehydrogenase] + ADP + H(+). Functionally, bifunctional enzyme which can phosphorylate or dephosphorylate isocitrate dehydrogenase (IDH) on a specific serine residue. This is a regulatory mechanism which enables bacteria to bypass the Krebs cycle via the glyoxylate shunt in response to the source of carbon. When bacteria are grown on glucose, IDH is fully active and unphosphorylated, but when grown on acetate or ethanol, the activity of IDH declines drastically concomitant with its phosphorylation. The protein is Isocitrate dehydrogenase kinase/phosphatase of Citrobacter koseri (strain ATCC BAA-895 / CDC 4225-83 / SGSC4696).